Reading from the N-terminus, the 148-residue chain is Large-conductance mechanosensitive channel (148 aa).

Helical transmembrane passes span 9 to 29 (AFAV…GAAF) and 79 to 99 (IQTV…VKAI).

It belongs to the MscL family. As to quaternary structure, homopentamer.

It is found in the cell inner membrane. Its function is as follows. Channel that opens in response to stretch forces in the membrane lipid bilayer. May participate in the regulation of osmotic pressure changes within the cell. The protein is Large-conductance mechanosensitive channel of Pseudomonas savastanoi pv. phaseolicola (strain 1448A / Race 6) (Pseudomonas syringae pv. phaseolicola (strain 1448A / Race 6)).